Here is a 100-residue protein sequence, read N- to C-terminus: Co-chaperonin GroES (100 aa).

This sequence belongs to the GroES chaperonin family. As to quaternary structure, heptamer of 7 subunits arranged in a ring. Interacts with the chaperonin GroEL.

It localises to the cytoplasm. In terms of biological role, together with the chaperonin GroEL, plays an essential role in assisting protein folding. The GroEL-GroES system forms a nano-cage that allows encapsulation of the non-native substrate proteins and provides a physical environment optimized to promote and accelerate protein folding. GroES binds to the apical surface of the GroEL ring, thereby capping the opening of the GroEL channel. This is Co-chaperonin GroES from Mycobacterium leprae (strain Br4923).